The chain runs to 250 residues: 5-oxoprolinase subunit A (250 aa).

This sequence belongs to the LamB/PxpA family. In terms of assembly, forms a complex composed of PxpA, PxpB and PxpC.

It catalyses the reaction 5-oxo-L-proline + ATP + 2 H2O = L-glutamate + ADP + phosphate + H(+). Its function is as follows. Catalyzes the cleavage of 5-oxoproline to form L-glutamate coupled to the hydrolysis of ATP to ADP and inorganic phosphate. The polypeptide is 5-oxoprolinase subunit A (Paraburkholderia xenovorans (strain LB400)).